Reading from the N-terminus, the 410-residue chain is Chaperonin GroEL (410 aa).

ATP is bound by residues 29-32 (TAGP), K50, and 86-90 (DGTTT).

The protein belongs to the chaperonin (HSP60) family. As to quaternary structure, forms a cylinder of 14 subunits composed of two heptameric rings stacked back-to-back. Interacts with the co-chaperonin GroES.

It localises to the cytoplasm. The enzyme catalyses ATP + H2O + a folded polypeptide = ADP + phosphate + an unfolded polypeptide.. Its function is as follows. Together with its co-chaperonin GroES, plays an essential role in assisting protein folding. The GroEL-GroES system forms a nano-cage that allows encapsulation of the non-native substrate proteins and provides a physical environment optimized to promote and accelerate protein folding. The chain is Chaperonin GroEL from Ehrlichia canis.